The primary structure comprises 206 residues: Ras-related protein Rab7 (206 aa).

Residues 15–22 (GDSGVGKT), 63–67 (DTAGQ), and 125–128 (NKID) each bind GTP. 2 S-geranylgeranyl cysteine lipidation sites follow: cysteine 204 and cysteine 206. Cysteine 206 is modified (cysteine methyl ester).

This sequence belongs to the small GTPase superfamily. Rab family.

The protein localises to the cell membrane. In terms of biological role, protein transport. Probably involved in vesicular traffic. The protein is Ras-related protein Rab7 of Pisum sativum (Garden pea).